The following is a 577-amino-acid chain: Proline--tRNA ligase (577 aa).

It belongs to the class-II aminoacyl-tRNA synthetase family. ProS type 1 subfamily. In terms of assembly, homodimer.

It localises to the cytoplasm. The catalysed reaction is tRNA(Pro) + L-proline + ATP = L-prolyl-tRNA(Pro) + AMP + diphosphate. In terms of biological role, catalyzes the attachment of proline to tRNA(Pro) in a two-step reaction: proline is first activated by ATP to form Pro-AMP and then transferred to the acceptor end of tRNA(Pro). As ProRS can inadvertently accommodate and process non-cognate amino acids such as alanine and cysteine, to avoid such errors it has two additional distinct editing activities against alanine. One activity is designated as 'pretransfer' editing and involves the tRNA(Pro)-independent hydrolysis of activated Ala-AMP. The other activity is designated 'posttransfer' editing and involves deacylation of mischarged Ala-tRNA(Pro). The misacylated Cys-tRNA(Pro) is not edited by ProRS. The protein is Proline--tRNA ligase of Thermotoga maritima (strain ATCC 43589 / DSM 3109 / JCM 10099 / NBRC 100826 / MSB8).